Reading from the N-terminus, the 299-residue chain is CDP-abequose synthase (299 aa).

Residue threonine 117 coordinates substrate. The active-site Proton acceptor is the tyrosine 134.

This sequence belongs to the NAD(P)-dependent epimerase/dehydratase family.

It catalyses the reaction CDP-alpha-D-abequose + NADP(+) = CDP-4-dehydro-3,6-dideoxy-alpha-D-glucose + NADPH + H(+). It participates in bacterial outer membrane biogenesis; LPS O-antigen biosynthesis. This chain is CDP-abequose synthase (rfbJ), found in Salmonella typhimurium (strain LT2 / SGSC1412 / ATCC 700720).